A 143-amino-acid polypeptide reads, in one-letter code: uncharacterized protein (143 aa).

This is an uncharacterized protein from Mycobacterium tuberculosis (strain CDC 1551 / Oshkosh).